The sequence spans 69 residues: DNA gyrase inhibitor YacG (69 aa).

C12, C15, C31, and C35 together coordinate Zn(2+). The interval R49 to Q69 is disordered.

This sequence belongs to the DNA gyrase inhibitor YacG family. Interacts with GyrB. Requires Zn(2+) as cofactor.

Functionally, inhibits all the catalytic activities of DNA gyrase by preventing its interaction with DNA. Acts by binding directly to the C-terminal domain of GyrB, which probably disrupts DNA binding by the gyrase. This chain is DNA gyrase inhibitor YacG, found in Thiobacillus denitrificans (strain ATCC 25259 / T1).